The chain runs to 582 residues: ATP-dependent lipid A-core flippase (582 aa).

Helical transmembrane passes span 27-47, 69-89, 142-162, 165-185, and 249-269; these read LIVAVIALVINAISDTYMISL, LIIFVMMFIRGTSGFVSTYCL, ALVSIVREGASIIGLLVLMFY, WQLSLVLFAVAPVVAWGIGVV, and AAANPIIQMIASFAIVAVLYL. An ABC transmembrane type-1 domain is found at 28 to 310; the sequence is IVAVIALVIN…LTNVTSQFQR (283 aa). One can recognise an ABC transporter domain in the interval 342 to 578; it reads VSVKDVSFTY…NGAYAQLHRI (237 aa). 376–383 lines the ATP pocket; the sequence is GRSGSGKS.

Belongs to the ABC transporter superfamily. Lipid exporter (TC 3.A.1.106) family. In terms of assembly, homodimer.

It is found in the cell inner membrane. The enzyme catalyses ATP + H2O + lipid A-core oligosaccharideSide 1 = ADP + phosphate + lipid A-core oligosaccharideSide 2.. In terms of biological role, involved in lipopolysaccharide (LPS) biosynthesis. Translocates lipid A-core from the inner to the outer leaflet of the inner membrane. Transmembrane domains (TMD) form a pore in the inner membrane and the ATP-binding domain (NBD) is responsible for energy generation. This is ATP-dependent lipid A-core flippase from Vibrio parahaemolyticus serotype O3:K6 (strain RIMD 2210633).